Here is a 79-residue protein sequence, read N- to C-terminus: Acyl carrier protein (79 aa).

The Carrier domain maps to 2 to 77 (SEIGERVKKI…DAVKFLEKNA (76 aa)). S37 is subject to O-(pantetheine 4'-phosphoryl)serine.

It belongs to the acyl carrier protein (ACP) family. Post-translationally, 4'-phosphopantetheine is transferred from CoA to a specific serine of apo-ACP by AcpS. This modification is essential for activity because fatty acids are bound in thioester linkage to the sulfhydryl of the prosthetic group.

The protein resides in the cytoplasm. Its pathway is lipid metabolism; fatty acid biosynthesis. Its function is as follows. Carrier of the growing fatty acid chain in fatty acid biosynthesis. This is Acyl carrier protein from Rhodopseudomonas palustris (strain BisA53).